The sequence spans 95 residues: YcgL domain-containing protein Sden_1630 (95 aa).

The region spanning 1 to 85 (MICTVYKSRR…PKANLLEEHK (85 aa)) is the YcgL domain.

The polypeptide is YcgL domain-containing protein Sden_1630 (Shewanella denitrificans (strain OS217 / ATCC BAA-1090 / DSM 15013)).